Reading from the N-terminus, the 107-residue chain is NADH dehydrogenase [ubiquinone] 1 beta subcomplex subunit 10-A (107 aa).

The disordered stretch occupies residues 1-23 (MGRKKGLPEFEESAPDGFDPENP).

This sequence belongs to the complex I NDUFB10 subunit family. As to quaternary structure, complex I is composed of at least 49 different subunits.

It localises to the mitochondrion inner membrane. Accessory subunit of the mitochondrial membrane respiratory chain NADH dehydrogenase (Complex I), that is believed not to be involved in catalysis. Complex I functions in the transfer of electrons from NADH to the respiratory chain. The immediate electron acceptor for the enzyme is believed to be ubiquinone. The protein is NADH dehydrogenase [ubiquinone] 1 beta subcomplex subunit 10-A of Arabidopsis thaliana (Mouse-ear cress).